Here is a 133-residue protein sequence, read N- to C-terminus: Ribosome-binding factor A (133 aa).

The protein belongs to the RbfA family. Monomer. Binds 30S ribosomal subunits, but not 50S ribosomal subunits or 70S ribosomes.

It localises to the cytoplasm. One of several proteins that assist in the late maturation steps of the functional core of the 30S ribosomal subunit. Associates with free 30S ribosomal subunits (but not with 30S subunits that are part of 70S ribosomes or polysomes). Required for efficient processing of 16S rRNA. May interact with the 5'-terminal helix region of 16S rRNA. The polypeptide is Ribosome-binding factor A (Salmonella typhi).